The chain runs to 793 residues: Calcium permeable stress-gated cation channel 1 (793 aa).

Residues 1 to 21 lie on the Lumenal side of the membrane; that stretch reads MAFNGYGIFDSDPRKNPSSDL. Residues 22–42 traverse the membrane as a helical segment; sequence RTQFWLAFLLGASACVFFCFF. Residues 43-95 are Cytoplasmic-facing; it reads RKRWKVLYAPRTTIEGLNLPTLSSSYYKWLMDLVNIPDDVVQNCAGLDGYVFL. Residues 96–116 form a helical membrane-spanning segment; it reads LFFKMGIKFLSFASLLGVLII. At 117–192 the chain is on the lumenal side; that stretch reads MPVNKHFRGD…IPGLPQPGDG (76 aa). A helical membrane pass occupies residues 193 to 213; sequence FLYLYVLFTYFISIFLLYVLF. At 214–444 the chain is on the cytoplasmic side; sequence SSTKSIADIR…HKFFQGWFIT (231 aa). The chain crosses the membrane as a helical span at residues 445 to 465; the sequence is LVTFMIILLWTVPVGAIAVFI. At 466-493 the chain is on the lumenal side; the sequence is NLDTIRRLWPELGRMIEDLPFLNSLLRT. Residues 494-514 traverse the membrane as a helical segment; the sequence is FLPTLVYSLFISISPFLFRWL. Residues 515–534 are Cytoplasmic-facing; that stretch reads SSMQGLSSRAEEEIYAVGKN. Residues 535 to 555 form a helical membrane-spanning segment; the sequence is YAYLFVNFFLVYVIAGSTSIW. Over 556 to 577 the chain is Lumenal; the sequence is ELAKDTTSFAHFLANRLPHQAQ. A helical transmembrane segment spans residues 578 to 598; sequence FFIDLIVLQGIGMFPLKLIQL. Residues 599–646 lie on the Cytoplasmic side of the membrane; the sequence is GKLSSYFVRRSFVPYSIASKKFETPDSFSVGIFLPQPMFIMLICLCYS. Residues 647-667 form a helical membrane-spanning segment; it reads IISPLILVFGLIYFIIGFLVY. Residues 668-687 lie on the Lumenal side of the membrane; sequence KYELIYQMEHPQHSTGELWS. The helical transmembrane segment at 688 to 708 threads the bilayer; it reads TIFLRMIFGCVIMQLTMMGLM. At 709-713 the chain is on the cytoplasmic side; that stretch reads SLRKA. The helical transmembrane segment at 714 to 734 threads the bilayer; the sequence is YWLSTVIFPLLCFTVISAYNF. Residues 735–793 are Lumenal-facing; the sequence is STMIRSSMQFVSLYYIRTHQSNTLSSESESRNSESSGSYVHPGFDLSNEELPLIDLNTA. The interval 759-778 is disordered; that stretch reads SSESESRNSESSGSYVHPGF.

It belongs to the CSC1 (TC 1.A.17) family.

The protein resides in the vacuole membrane. Functionally, acts as an osmosensitive calcium-permeable cation channel. The polypeptide is Calcium permeable stress-gated cation channel 1 (Schizosaccharomyces pombe (strain 972 / ATCC 24843) (Fission yeast)).